The following is a 250-amino-acid chain: NAD(P)H-quinone oxidoreductase subunit K, chloroplastic (250 aa).

Positions 67, 68, 132, and 163 each coordinate [4Fe-4S] cluster.

Belongs to the complex I 20 kDa subunit family. NDH is composed of at least 16 different subunits, 5 of which are encoded in the nucleus. It depends on [4Fe-4S] cluster as a cofactor.

The protein localises to the plastid. Its subcellular location is the chloroplast thylakoid membrane. The catalysed reaction is a plastoquinone + NADH + (n+1) H(+)(in) = a plastoquinol + NAD(+) + n H(+)(out). The enzyme catalyses a plastoquinone + NADPH + (n+1) H(+)(in) = a plastoquinol + NADP(+) + n H(+)(out). Functionally, NDH shuttles electrons from NAD(P)H:plastoquinone, via FMN and iron-sulfur (Fe-S) centers, to quinones in the photosynthetic chain and possibly in a chloroplast respiratory chain. The immediate electron acceptor for the enzyme in this species is believed to be plastoquinone. Couples the redox reaction to proton translocation, and thus conserves the redox energy in a proton gradient. In Adiantum capillus-veneris (Maidenhair fern), this protein is NAD(P)H-quinone oxidoreductase subunit K, chloroplastic.